The chain runs to 174 residues: Peptide deformylase (174 aa).

Residues Cys-96 and His-138 each coordinate Fe cation. The active site involves Glu-139. Residue His-142 participates in Fe cation binding.

The protein belongs to the polypeptide deformylase family. Requires Fe(2+) as cofactor.

It carries out the reaction N-terminal N-formyl-L-methionyl-[peptide] + H2O = N-terminal L-methionyl-[peptide] + formate. Its function is as follows. Removes the formyl group from the N-terminal Met of newly synthesized proteins. Requires at least a dipeptide for an efficient rate of reaction. N-terminal L-methionine is a prerequisite for activity but the enzyme has broad specificity at other positions. The sequence is that of Peptide deformylase from Helicobacter pylori (strain HPAG1).